The chain runs to 191 residues: Calcium and integrin-binding protein 1 (191 aa).

Gly-2 carries the N-myristoyl glycine lipid modification. EF-hand domains lie at 103–138 (TPDI…LTGE) and 148–183 (EMKQ…SPDF). Ca(2+)-binding residues include Asp-116, Asp-118, Asp-120, Thr-122, Asp-127, Asp-161, Asp-163, Asp-165, Thr-167, and Glu-172.

As to quaternary structure, monomer. Interacts with the heterodimeric integrin alpha-IIb/beta3 (ITGA2B-ITGB3). Interacts with ITGA2B (via cytoplasmic domain); the interaction is direct and calcium-dependent. Interacts with the protein kinases PLK2/SNK and PRKDC (via the region immediately upstream of the kinase domain). Interacts with PLK3; the interaction inhibits PLK3 kinase activity. Interacts with PSEN2. Interacts (via C-terminus) with F8. Interacts with NBR1 (via C-terminus). Interacts with FEZ1 (via C-terminus). Interacts with UBR5 (via C-terminus); the interaction is sensitive to DNA damage, and may target CIB1 for ubiquitin-mediated degradation. Interacts with IFI6; the interaction is direct. Interacts with BCL2. Interacts with ITPR3; the interaction occurs in a calcium dependent manner. Interacts with PTK2/FAK1. Interacts with MAP3K5; the interaction inhibits MAP3K5 activation by phosphorylation, and its subsequent interaction with TRAF2. Interacts (via C-terminal region) with STMN2 (via the N-terminal region); the interaction is direct, occurs in a calcium-dependent manner and attenuates the STMN2-induced neurite outgrowth inhibition. Interacts with SPHK1, the interaction occurs in a calcium-dependent manner. Interacts with ITGA2B (via C-terminal cytoplasmic tail); the interaction occurs upon platelet aggregation and is stabilized/increased in a calcium and magnesium-dependent manner. Interacts with PAK1 (via N-terminal region); the interaction is direct and occurs in a calcium-dependent manner. Interacts with RAC3 (via C-terminal region); the interaction induces their association with the cytoskeleton upon alpha-IIb/beta3 integrin-mediated adhesion. Interacts with ITGA5 and ITGAV. Interacts with MYO1C. Interacts with ITGA2B (via C-terminal cytoplasmic tail region). Interacts (via C-terminal region) with PPP3R1; the interaction increases upon cardiomyocytes hypertrophy. Interacts with CACNA1C; the interaction increases upon cardiomyocytes hypertrophy. Interacts with TAS1R2 (via C-terminus); this interaction is independent of the myristoylation state of CIB1. Interacts and forms a complex with TMC6 and TMC8; the interaction stabilizes each component of the complex. In terms of tissue distribution, expressed in cardiomyocytes and neurons (at protein level). Expressed during early neural development.

It localises to the membrane. The protein resides in the cell membrane. The protein localises to the sarcolemma. Its subcellular location is the apical cell membrane. It is found in the cell projection. It localises to the ruffle membrane. The protein resides in the filopodium tip. The protein localises to the growth cone. Its subcellular location is the lamellipodium. It is found in the cytoplasm. It localises to the cytoskeleton. The protein resides in the microtubule organizing center. The protein localises to the centrosome. Its subcellular location is the perinuclear region. It is found in the nucleus. It localises to the neuron projection. The protein resides in the perikaryon. Its function is as follows. Calcium-binding protein that plays a role in the regulation of numerous cellular processes, such as cell differentiation, cell division, cell proliferation, cell migration, thrombosis, angiogenesis, cardiac hypertrophy and apoptosis. Involved in bone marrow megakaryocyte differentiation by negatively regulating thrombopoietin-mediated signaling pathway. Participates in the endomitotic cell cycle of megakaryocyte, a form of mitosis in which both karyokinesis and cytokinesis are interrupted. Plays a role in integrin signaling by negatively regulating alpha-IIb/beta3 activation in thrombin-stimulated megakaryocytes preventing platelet aggregation. Up-regulates PTK2/FAK1 activity, and is also needed for the recruitment of PTK2/FAK1 to focal adhesions; it thus appears to play an important role in focal adhesion formation. Positively regulates cell migration on fibronectin in a CDC42-dependent manner, the effect being negatively regulated by PAK1. Functions as a negative regulator of stress activated MAP kinase (MAPK) signaling pathways. Down-regulates inositol 1,4,5-trisphosphate receptor-dependent calcium signaling. Involved in sphingosine kinase SPHK1 translocation to the plasma membrane in a N-myristoylation-dependent manner preventing TNF-alpha-induced apoptosis. Regulates serine/threonine-protein kinase PLK3 activity for proper completion of cell division progression. Plays a role in microtubule (MT) dynamics during neuronal development; disrupts the MT depolymerization activity of STMN2 attenuating NGF-induced neurite outgrowth and the MT reorganization at the edge of lamellipodia. Promotes cardiomyocyte hypertrophy via activation of the calcineurin/NFAT signaling pathway. Stimulates calcineurin PPP3R1 activity by mediating its anchoring to the sarcolemma. In ischemia-induced (pathological or adaptive) angiogenesis, stimulates endothelial cell proliferation, migration and microvessel formation by activating the PAK1 and ERK1/ERK2 signaling pathway. Also promotes cancer cell survival and proliferation. May regulate cell cycle and differentiation of spermatogenic germ cells, and/or differentiation of supporting Sertoli cells. Forms a complex with TMC6/EVER1 and TMC8/EVER2 in lymphocytes and keratynocytes where CIB1 stabilizes TMC6 and TMC8 levels and reciprocally. In Rattus norvegicus (Rat), this protein is Calcium and integrin-binding protein 1 (Cib1).